A 202-amino-acid chain; its full sequence is Endothelin-1 (202 aa).

An N-terminal signal peptide occupies residues 1-25 (MDYFPMIFALLFVAFQGAPEAAVLG). The propeptide occupies 26–50 (TELSAGAEDGGEKPAPATPWRPRRS). Cystine bridges form between C53/C67 and C55/C63. The propeptide occupies 74 to 202 (VNTPEHVVPY…DKKVIYNRAH (129 aa)). The endothelin-like stretch occupies residues 110–124 (CQCASQTDKKCWNFC).

The protein belongs to the endothelin/sarafotoxin family.

Its subcellular location is the secreted. Endothelins are endothelium-derived vasoconstrictor peptides. Probable ligand for G-protein coupled receptors EDNRA and EDNRB which activates PTK2B, BCAR1, BCAR3 and, GTPases RAP1 and RHOA cascade in glomerular mesangial cells. Also binds the DEAR/FBXW7-AS1 receptor. Promotes mesenteric arterial wall remodeling via activation of ROCK signaling and subsequent colocalization of NFATC3 with F-actin filaments. NFATC3 then translocates to the nucleus where it subsequently promotes the transcription of the smooth muscle hypertrophy and differentiation marker ACTA2. This Bos taurus (Bovine) protein is Endothelin-1 (EDN1).